The chain runs to 202 residues: T-cell surface glycoprotein CD3 epsilon chain (202 aa).

Residues 1 to 21 (MQSRNLWRILGLCLLSVGAWG) form the signal peptide. Topologically, residues 22 to 122 (QDEDFKASDD…VCANCIEVNL (101 aa)) are extracellular. One can recognise an Ig-like domain in the interval 37–107 (PEKRFKVSIS…ADSIKEKSYL (71 aa)). Cysteines 54 and 96 form a disulfide. A helical membrane pass occupies residues 123–143 (MAVVTIIVADICLTLGLLLMV). Over 144-202 (YYWSKTRKANAKPVMRGTGAGSRPRGQNKEKPPPVPNPDYEPIRKGQQDLYSGLNQRGI) the chain is Cytoplasmic. The disordered stretch occupies residues 156-202 (PVMRGTGAGSRPRGQNKEKPPPVPNPDYEPIRKGQQDLYSGLNQRGI). Residues 170 to 187 (QNKEKPPPVPNPDYEPIR) form an NUMB-binding region region. The 28-residue stretch at 173–200 (EKPPPVPNPDYEPIRKGQQDLYSGLNQR) folds into the ITAM domain. The segment at 174–181 (KPPPVPNP) is proline-rich sequence. Tyr-183 and Tyr-194 each carry phosphotyrosine. Residues 192–202 (DLYSGLNQRGI) show a composition bias toward polar residues.

The TCR-CD3 complex is composed of a CD3D/CD3E and a CD3G/CD3E heterodimers that preferentially associate with TCRalpha and TCRbeta, respectively, to form TCRalpha/CD3E/CD3G and TCRbeta/CD3G/CD3E trimers. In turn, the hexamer interacts with CD3Z homodimer to form the TCR-CD3 complex. Alternatively, TCRalpha and TCRbeta can be replaced by TCRgamma and TCRdelta. Interacts with CD6. Interacts (via Proline-rich sequence) with NCK1; the interaction is ligand dependent but independent of tyrosine kinase activation. Phosphorylated on Tyr residues after T-cell receptor triggering by LCK in association with CD4/CD8.

It localises to the cell membrane. Functionally, part of the TCR-CD3 complex present on T-lymphocyte cell surface that plays an essential role in adaptive immune response. When antigen presenting cells (APCs) activate T-cell receptor (TCR), TCR-mediated signals are transmitted across the cell membrane by the CD3 chains CD3D, CD3E, CD3G and CD3Z. All CD3 chains contain immunoreceptor tyrosine-based activation motifs (ITAMs) in their cytoplasmic domain. Upon TCR engagement, these motifs become phosphorylated by Src family protein tyrosine kinases LCK and FYN, resulting in the activation of downstream signaling pathways. In addition of this role of signal transduction in T-cell activation, CD3E plays an essential role in correct T-cell development. Also participates in internalization and cell surface down-regulation of TCR-CD3 complexes via endocytosis sequences present in CD3E cytosolic region. In addition to its role as a TCR coreceptor, it serves as a receptor for ITPRIPL1. Ligand recognition inhibits T-cell activation by promoting interaction with NCK1, which prevents CD3E-ZAP70 interaction and blocks the ERK-NFkB signaling cascade and calcium influx. This is T-cell surface glycoprotein CD3 epsilon chain (CD3E) from Canis lupus familiaris (Dog).